The following is a 258-amino-acid chain: 6-phosphogluconolactonase (258 aa).

Alanine 2 is subject to N-acetylalanine. At serine 49 the chain carries Phosphoserine. Lysine 180 is subject to N6-acetyllysine.

The protein belongs to the glucosamine/galactosamine-6-phosphate isomerase family. 6-phosphogluconolactonase subfamily.

It is found in the cytoplasm. The catalysed reaction is 6-phospho-D-glucono-1,5-lactone + H2O = 6-phospho-D-gluconate + H(+). It participates in carbohydrate degradation; pentose phosphate pathway; D-ribulose 5-phosphate from D-glucose 6-phosphate (oxidative stage): step 2/3. In terms of biological role, hydrolysis of 6-phosphogluconolactone to 6-phosphogluconate. The polypeptide is 6-phosphogluconolactonase (PGLS) (Bos taurus (Bovine)).